We begin with the raw amino-acid sequence, 513 residues long: ATP synthase subunit alpha (513 aa).

169-176 contacts ATP; the sequence is GDRQIGKT.

The protein belongs to the ATPase alpha/beta chains family. As to quaternary structure, F-type ATPases have 2 components, CF(1) - the catalytic core - and CF(0) - the membrane proton channel. CF(1) has five subunits: alpha(3), beta(3), gamma(1), delta(1), epsilon(1). CF(0) has three main subunits: a(1), b(2) and c(9-12). The alpha and beta chains form an alternating ring which encloses part of the gamma chain. CF(1) is attached to CF(0) by a central stalk formed by the gamma and epsilon chains, while a peripheral stalk is formed by the delta and b chains.

It is found in the cell inner membrane. It catalyses the reaction ATP + H2O + 4 H(+)(in) = ADP + phosphate + 5 H(+)(out). Its function is as follows. Produces ATP from ADP in the presence of a proton gradient across the membrane. The alpha chain is a regulatory subunit. The polypeptide is ATP synthase subunit alpha (Shewanella woodyi (strain ATCC 51908 / MS32)).